Reading from the N-terminus, the 168-residue chain is MIIFYLSGDRVFSTDQNAINGLYNKRYFGKVVEGKLFLSLLEAAYLVERGKIEVRDGKRKLSLEEIMNLGRARDELFDAKYLVYKDLRDRGYTVKSGLKFGSHFRVYRRGMEEHSEWLVWVVPENSRLSPNDITARVRVAHGVRKNMIMAIVDEDADVTYYKVEWVKF.

Active-site residues include Tyr107, His114, and Lys145.

This sequence belongs to the tRNA-intron endonuclease family. Archaeal short subfamily. In terms of assembly, homotetramer; although the tetramer contains four active sites, only two participate in the cleavage. Therefore, it should be considered as a dimer of dimers.

The catalysed reaction is pretRNA = a 3'-half-tRNA molecule with a 5'-OH end + a 5'-half-tRNA molecule with a 2',3'-cyclic phosphate end + an intron with a 2',3'-cyclic phosphate and a 5'-hydroxyl terminus.. Endonuclease that removes tRNA introns. Cleaves pre-tRNA at the 5'- and 3'-splice sites to release the intron. The products are an intron and two tRNA half-molecules bearing 2',3' cyclic phosphate and 5'-OH termini. Recognizes a pseudosymmetric substrate in which 2 bulged loops of 3 bases are separated by a stem of 4 bp. This chain is tRNA-splicing endonuclease, found in Thermococcus kodakarensis (strain ATCC BAA-918 / JCM 12380 / KOD1) (Pyrococcus kodakaraensis (strain KOD1)).